Here is a 355-residue protein sequence, read N- to C-terminus: UDP-N-acetylglucosamine--N-acetylmuramyl-(pentapeptide) pyrophosphoryl-undecaprenol N-acetylglucosamine transferase (355 aa).

Residues 13–15, Asn125, Arg162, Ser190, Ile244, and Gln289 contribute to the UDP-N-acetyl-alpha-D-glucosamine site; that span reads TGG.

The protein belongs to the glycosyltransferase 28 family. MurG subfamily.

It localises to the cell inner membrane. The catalysed reaction is di-trans,octa-cis-undecaprenyl diphospho-N-acetyl-alpha-D-muramoyl-L-alanyl-D-glutamyl-meso-2,6-diaminopimeloyl-D-alanyl-D-alanine + UDP-N-acetyl-alpha-D-glucosamine = di-trans,octa-cis-undecaprenyl diphospho-[N-acetyl-alpha-D-glucosaminyl-(1-&gt;4)]-N-acetyl-alpha-D-muramoyl-L-alanyl-D-glutamyl-meso-2,6-diaminopimeloyl-D-alanyl-D-alanine + UDP + H(+). It functions in the pathway cell wall biogenesis; peptidoglycan biosynthesis. Cell wall formation. Catalyzes the transfer of a GlcNAc subunit on undecaprenyl-pyrophosphoryl-MurNAc-pentapeptide (lipid intermediate I) to form undecaprenyl-pyrophosphoryl-MurNAc-(pentapeptide)GlcNAc (lipid intermediate II). The chain is UDP-N-acetylglucosamine--N-acetylmuramyl-(pentapeptide) pyrophosphoryl-undecaprenol N-acetylglucosamine transferase from Neisseria meningitidis serogroup C / serotype 2a (strain ATCC 700532 / DSM 15464 / FAM18).